Reading from the N-terminus, the 353-residue chain is Nicotinate-nucleotide--dimethylbenzimidazole phosphoribosyltransferase (353 aa).

The active-site Proton acceptor is glutamate 318.

It belongs to the CobT family.

The catalysed reaction is 5,6-dimethylbenzimidazole + nicotinate beta-D-ribonucleotide = alpha-ribazole 5'-phosphate + nicotinate + H(+). The protein operates within nucleoside biosynthesis; alpha-ribazole biosynthesis; alpha-ribazole from 5,6-dimethylbenzimidazole: step 1/2. Functionally, catalyzes the synthesis of alpha-ribazole-5'-phosphate from nicotinate mononucleotide (NAMN) and 5,6-dimethylbenzimidazole (DMB). The chain is Nicotinate-nucleotide--dimethylbenzimidazole phosphoribosyltransferase from Geobacter metallireducens (strain ATCC 53774 / DSM 7210 / GS-15).